A 958-amino-acid chain; its full sequence is Probable protein phosphatase DDB_G0282105 (958 aa).

Helical transmembrane passes span 2–22 (VLMM…SLMV) and 26–46 (FLEF…ILFF). Residues 142 to 330 (SASQQSELTN…KDKERERSSS (189 aa)) are a coiled coil. Residues 312–328 (QEKEKQKLEKDKERERS) show a composition bias toward basic and acidic residues. Disordered regions lie at residues 312-361 (QEKE…PIPI), 380-421 (SVNG…PKFK), 445-475 (HLGS…TTPI), 491-525 (ITSP…ILSP), and 619-659 (NNNN…NDNK). Low complexity-rich tracts occupy residues 329–361 (SSFS…PIPI), 390–401 (SSVSPPSSSYLR), 452–475 (TPAN…TTPI), 491–515 (ITSP…SSSS), and 619–655 (NNNN…NNNK). Residues 613-666 (NFLKTNNNNNKNNIEESNNNNNNNNNNNNNNNNNNNNNNNNNKNDNKEVNSKLE) adopt a coiled-coil conformation. One can recognise a PPM-type phosphatase domain in the interval 675–958 (KIGLRRAKKK…DNVTVIIVKL (284 aa)). Mn(2+)-binding residues include Asp722, Gly723, Asp905, and Asp949.

The protein in the C-terminal section; belongs to the PP2C family. Mg(2+) serves as cofactor. Mn(2+) is required as a cofactor.

The protein localises to the membrane. It catalyses the reaction O-phospho-L-seryl-[protein] + H2O = L-seryl-[protein] + phosphate. The catalysed reaction is O-phospho-L-threonyl-[protein] + H2O = L-threonyl-[protein] + phosphate. This Dictyostelium discoideum (Social amoeba) protein is Probable protein phosphatase DDB_G0282105.